The chain runs to 216 residues: MVDMTQLQAIYGGTFDPVHYGHLKPVEILANQIGLSKVIIMPNNVPPHRPQPEATSAQRVHMLKLAIADKPLFTLDERELQRDTPSWTADTLQAWRQEQGAEKPLAFIIGQDSLLTFPTWHRYETILDNVHLIVCRRPGYPLTMAHDADQQWLDRHLTHDVERLHNRPAGAIYLAETPWFDISATIIRQRLERGESCAEMLPATVLDYIREQGLYC.

Belongs to the NadD family.

The enzyme catalyses nicotinate beta-D-ribonucleotide + ATP + H(+) = deamido-NAD(+) + diphosphate. Its pathway is cofactor biosynthesis; NAD(+) biosynthesis; deamido-NAD(+) from nicotinate D-ribonucleotide: step 1/1. Catalyzes the reversible adenylation of nicotinate mononucleotide (NaMN) to nicotinic acid adenine dinucleotide (NaAD). This Klebsiella pneumoniae (strain 342) protein is Probable nicotinate-nucleotide adenylyltransferase.